The following is a 254-amino-acid chain: Thiazole synthase (254 aa).

The active-site Schiff-base intermediate with DXP is Lys96. Residues Gly157, 183–184 (AG), and 205–206 (NT) each bind 1-deoxy-D-xylulose 5-phosphate.

This sequence belongs to the ThiG family. Homotetramer. Forms heterodimers with either ThiH or ThiS.

It is found in the cytoplasm. The enzyme catalyses [ThiS sulfur-carrier protein]-C-terminal-Gly-aminoethanethioate + 2-iminoacetate + 1-deoxy-D-xylulose 5-phosphate = [ThiS sulfur-carrier protein]-C-terminal Gly-Gly + 2-[(2R,5Z)-2-carboxy-4-methylthiazol-5(2H)-ylidene]ethyl phosphate + 2 H2O + H(+). It functions in the pathway cofactor biosynthesis; thiamine diphosphate biosynthesis. In terms of biological role, catalyzes the rearrangement of 1-deoxy-D-xylulose 5-phosphate (DXP) to produce the thiazole phosphate moiety of thiamine. Sulfur is provided by the thiocarboxylate moiety of the carrier protein ThiS. In vitro, sulfur can be provided by H(2)S. This Clostridium perfringens (strain SM101 / Type A) protein is Thiazole synthase.